The sequence spans 563 residues: Serine/threonine-protein kinase WNK8 (563 aa).

Residues 29 to 286 form the Protein kinase domain; the sequence is IRYDDVLGRG…ALELSKDPFL (258 aa). Residues 109 to 112 and lysine 159 contribute to the ATP site; that span reads TELF. Aspartate 176 serves as the catalytic Proton acceptor. The segment covering 426–436 has biased composition (polar residues); that stretch reads TSSHHNQNSPR. Residues 426–459 form a disordered region; the sequence is TSSHHNQNSPRLTHEDHEAANQQTVNSKDEEAAG. The residue at position 509 (serine 509) is a Phosphoserine.

Belongs to the protein kinase superfamily. Ser/Thr protein kinase family. WNK subfamily. Interacts with RGS1 and GB1, but not with GPA1. The association with RGS1 at the plasma membrane is triggered by induction of glucose. Binds to EDM2 in nucleus. Autophosphorylated.

The protein localises to the nucleus. It catalyses the reaction L-seryl-[protein] + ATP = O-phospho-L-seryl-[protein] + ADP + H(+). The catalysed reaction is L-threonyl-[protein] + ATP = O-phospho-L-threonyl-[protein] + ADP + H(+). Its function is as follows. Regulates flowering time by modulating the photoperiod pathway. Phosphorylates the vacuolar ATPase subunit C (VATC) and RGS1. Regulates EDM2 that, in turn, modulates development processes. The chain is Serine/threonine-protein kinase WNK8 (WNK8) from Arabidopsis thaliana (Mouse-ear cress).